Consider the following 382-residue polypeptide: tRNA(Met) cytidine acetate ligase (382 aa).

ATP is bound by residues 9 to 22, Gly103, Asn152, and Arg177; that span reads VTEY…HAYQ.

This sequence belongs to the TmcAL family.

Its subcellular location is the cytoplasm. It carries out the reaction cytidine(34) in elongator tRNA(Met) + acetate + ATP = N(4)-acetylcytidine(34) in elongator tRNA(Met) + AMP + diphosphate. Functionally, catalyzes the formation of N(4)-acetylcytidine (ac(4)C) at the wobble position of elongator tRNA(Met), using acetate and ATP as substrates. First activates an acetate ion to form acetyladenylate (Ac-AMP) and then transfers the acetyl group to tRNA to form ac(4)C34. The protein is tRNA(Met) cytidine acetate ligase of Levilactobacillus brevis (strain ATCC 367 / BCRC 12310 / CIP 105137 / JCM 1170 / LMG 11437 / NCIMB 947 / NCTC 947) (Lactobacillus brevis).